The sequence spans 315 residues: Ribose-phosphate pyrophosphokinase (315 aa).

Residues 37 to 39 and 96 to 97 each bind ATP; these read DGE and RQ. The Mg(2+) site is built by His131 and Asp170. The active site involves Lys194. D-ribose 5-phosphate is bound by residues Arg196, Asp220, and 224–228; that span reads DTGGT.

The protein belongs to the ribose-phosphate pyrophosphokinase family. Class I subfamily. In terms of assembly, homohexamer. The cofactor is Mg(2+).

Its subcellular location is the cytoplasm. It carries out the reaction D-ribose 5-phosphate + ATP = 5-phospho-alpha-D-ribose 1-diphosphate + AMP + H(+). It functions in the pathway metabolic intermediate biosynthesis; 5-phospho-alpha-D-ribose 1-diphosphate biosynthesis; 5-phospho-alpha-D-ribose 1-diphosphate from D-ribose 5-phosphate (route I): step 1/1. Involved in the biosynthesis of the central metabolite phospho-alpha-D-ribosyl-1-pyrophosphate (PRPP) via the transfer of pyrophosphoryl group from ATP to 1-hydroxyl of ribose-5-phosphate (Rib-5-P). The protein is Ribose-phosphate pyrophosphokinase of Yersinia pestis.